A 296-amino-acid polypeptide reads, in one-letter code: Remorin 4.1 (296 aa).

Disordered regions lie at residues 1-78 (MLTL…SGEN), 121-142 (TRIG…DSNP), and 242-266 (EKTQ…EGKR). The segment covering 21–39 (ASDRRDETPSSEIVVRDIH) has biased composition (basic and acidic residues). Polar residues-rich tracts occupy residues 41–53 (MTTT…PQQR) and 62–78 (PSRS…SGEN). Basic and acidic residues-rich tracts occupy residues 121-135 (TRIG…HGQV) and 253-266 (RKAE…EGKR). Positions 226-261 (MKKIERKLEDRRAKAMEKTQNKVAKAQRKAEERRAT) form a coiled coil.

Belongs to the remorin family. Forms homodimer and heterodimer with REM4.2. Interacts with KIN11. In terms of processing, phosphorylated by KIN11. Post-translationally, probably ubiquitinated and degraded by the 26S proteasome pathway. Predominantly detected in bud, stem, root, flower, silique, and leaves, and enhanced dramatically in senescence leaf.

It localises to the cell membrane. Collaborates with REM4.2 to positively regulate the BCTV and BSCTV susceptibility. This Arabidopsis thaliana (Mouse-ear cress) protein is Remorin 4.1.